We begin with the raw amino-acid sequence, 226 residues long: Ribonuclease 3 (226 aa).

The RNase III domain occupies 6-128 (INRLQRKLGY…LIGGVFLDSD (123 aa)). Glutamate 41 serves as a coordination point for Mg(2+). Aspartate 45 is an active-site residue. Aspartate 114 and glutamate 117 together coordinate Mg(2+). The active site involves glutamate 117. A DRBM domain is found at 155–225 (DPKTRLQEYL…AEQALKKLEL (71 aa)).

Belongs to the ribonuclease III family. In terms of assembly, homodimer. Mg(2+) serves as cofactor.

It localises to the cytoplasm. The catalysed reaction is Endonucleolytic cleavage to 5'-phosphomonoester.. Digests double-stranded RNA. Involved in the processing of primary rRNA transcript to yield the immediate precursors to the large and small rRNAs (23S and 16S). Processes some mRNAs, and tRNAs when they are encoded in the rRNA operon. Processes pre-crRNA and tracrRNA of type II CRISPR loci if present in the organism. This is Ribonuclease 3 from Escherichia coli O139:H28 (strain E24377A / ETEC).